A 291-amino-acid chain; its full sequence is Mitochondrial citrate transporter B (291 aa).

3 Solcar repeats span residues 10 to 97, 105 to 193, and 201 to 283; these read PQKW…IKNS, LSPA…LKES, and PTLF…MTYL. 6 helical membrane passes run 16–36, 74–94, 112–132, 172–192, 203–220, and 255–276; these read LIAGGVAGGVEAASTYPFEYA, STLIIGTTAKAAVRFVSYDTI, VAGVVAGATESVLAVTPTERI, TTLKQSATSAVRMGTYNILKE, LFTTFCMGALAGVVTVYA, and FWKGSSMRLGRLLLSGGIVFSV.

The protein belongs to the mitochondrial carrier (TC 2.A.29) family.

Its subcellular location is the mitochondrion inner membrane. The catalysed reaction is citrate(in) + H(+)(in) = citrate(out) + H(+)(out). Mitochondrial transporter that mediates citrate export from mitochondria to cytoplasm. Both ctpA, ctpB, and ctpD play important roles in citric acid transport across the mitochondrial membrane and function in a redundant manner. The sequence is that of Mitochondrial citrate transporter B from Aspergillus niger (strain ATCC 1015 / CBS 113.46 / FGSC A1144 / LSHB Ac4 / NCTC 3858a / NRRL 328 / USDA 3528.7).